A 148-amino-acid polypeptide reads, in one-letter code: Puroindoline-B (148 aa).

The first 19 residues, 1–19 (MKTLFLLALLALVASTTFA), serve as a signal peptide directing secretion. The propeptide occupies 20–29 (QYSEVGGWYN).

Five disulfide bonds are present. Endosperm and aleurone layer of developing kernels. In the aleurone layer, mainly localized to starch granules and the surface of the plasma membrane, forming a uniform layer, also abundant in the intercellular space. In the endosperm, mainly localized to starch granules and the plasma membrane, but less abundant in the intercellular space. Not found in roots or coleoptiles.

It localises to the membrane. It is found in the secreted. The protein resides in the extracellular space. Its function is as follows. Acts as a membranotoxin, probably through its antibacterial and antifungal activities, contributing to the defense mechanism of the plant against predators. Forms monovalent cation-selective ion channels in membranes. Has antibacterial activity against the Gram-positive bacteria S.aureus and C.michiganensis, and the Gram-negative bacteria E.coli, P.syringae pv phaseoli, A.tumefaciens and E.carotovora subsp carotovora. Acts synergistically with PINA against bacteria. Contributes to grain texture and hardness. The protein is Puroindoline-B (PINB) of Triticum aestivum (Wheat).